The following is a 169-amino-acid chain: Myelin basic protein (169 aa).

Ala-1 carries the N-acetylalanine modification. Residues 1–114 (AAQKRPSQRS…GRGLSLSRFS (114 aa)) are disordered. Ser-7 carries the post-translational modification Phosphoserine; in C5 and C6. Ser-10 is subject to Phosphoserine. Tyr-12 bears the Phosphotyrosine mark. Ser-17 bears the Phosphoserine mark. Thr-18 is modified (phosphothreonine). Residue Arg-23 is modified to Citrulline; in form C8b. Position 29 is a citrulline (Arg-29). Thr-33 carries the post-translational modification Phosphothreonine. The residue at position 38 (Ser-38) is a Phosphoserine. At Arg-41 the chain carries Citrulline; alternate. At Arg-41 the chain carries Omega-N-methylarginine; alternate. An induces experimental autoimmune encephalomyelitis (EAE) 1 region spans residues 43 to 87 (FGSDRGAPKRGSGKDGHHAARTTHYGSLPQKAQGHRPQDENPVVH). Citrulline; in form C8b is present on Arg-47. An Omega-N-methylarginine modification is found at Arg-47. Ser-54 carries the post-translational modification Phosphoserine; in C4, C5 and C6. Residue Arg-63 is modified to Citrulline. Thr-65 carries the post-translational modification Phosphothreonine. The residue at position 67 (Tyr-67) is a Phosphotyrosine. Thr-94 carries the phosphothreonine modification. The residue at position 96 (Arg-96) is a Citrulline; in form C2, C3, C8a and C8b. Thr-97 carries the post-translational modification Phosphothreonine; by MAPK; in C3, C4, C5 and C6. Deamidated glutamine; in form C5 is present on Gln-102. Arg-106 carries the citrulline; alternate modification. The residue at position 106 (Arg-106) is an Omega-N-methylarginine; alternate. Arg-106 carries the symmetric dimethylarginine; alternate modification. Arg-112 is subject to Citrulline. At Ser-114 the chain carries Phosphoserine. Positions 114–122 (SWGAEGQKP) are induces experimental autoimmune encephalomyelitis (EAE) 2. Gln-120 carries the post-translational modification Deamidated glutamine; in form C3. Lys-121 carries the post-translational modification N6-acetyllysine. Arg-129 carries the citrulline modification. Residues 133-169 (YKSAHKGLKGHDAQGTLSKIFKLGGRDSRSGSPMARR) are disordered. The residue at position 146 (Gln-146) is a Deamidated glutamine; in form C2. The residue at position 158 (Arg-158) is a Citrulline. Ser-160 carries the post-translational modification Phosphoserine; in C4 and C6. Arg-161 carries the citrulline; in form C3 modification. Ser-164 bears the Phosphoserine; in form C3, C5 and C6 mark. Citrulline is present on residues Arg-168 and Arg-169.

This sequence belongs to the myelin basic protein family. In terms of assembly, homodimer; self-associates in the presence of lysolipid. Post-translationally, at least 6 charge isomers; C1 (the most cationic and least modified form), C2, C3, C4, C5 and C6 (the least cationic form); are produced as a result of optional post-translational modifications, such as phosphorylation of serine or threonine residues, deamidation of glutamine or asparagine residues, citrullination and methylation of arginine residues. Phosphorylated by TAOK2, VRK2, MAPK11, MAPK12, MAPK14 and MINK1. In terms of processing, proteolytically cleaved in B cell lysosomes by cathepsin CTSG which degrades the major immunogenic MBP epitope and prevents the activation of MBP-specific autoreactive T cells. In terms of tissue distribution, found in both the central and the peripheral nervous system.

The protein localises to the myelin membrane. In terms of biological role, is, with PLP, the most abundant protein component of the myelin membrane in the CNS. Has a role in both the formation and stabilization of this compact multilayer arrangement of bilayers. Each splice variant and charge isomer may have a specialized function in the assembly of an optimized, biochemically functional myelin membrane. The polypeptide is Myelin basic protein (MBP) (Bos taurus (Bovine)).